The following is a 780-amino-acid chain: Acyl-CoA dehydrogenase family member 11 (780 aa).

Lys177 carries the N6-acetyllysine modification. The residue at position 324 (Tyr324) is a Phosphotyrosine. N6-succinyllysine is present on Lys391. Residues 504-514 (FCMTEPDVASS) and 538-540 (WSS) each bind FAD. Ser514 provides a ligand contact to substrate. 629-632 (GPGR) provides a ligand contact to substrate. FAD-binding positions include Arg657, Gln727, and 727–731 (QVCGG). Residue Gly755 participates in substrate binding. 756-758 (PDE) is a binding site for FAD.

It belongs to the acyl-CoA dehydrogenase family. As to quaternary structure, homodimer. It depends on FAD as a cofactor. As to expression, widely expressed with highest levels in brain followed by liver, heart and kidney.

Its subcellular location is the peroxisome. The protein resides in the mitochondrion membrane. The catalysed reaction is a 2,3-saturated acyl-CoA + oxidized [electron-transfer flavoprotein] + H(+) = a (2E)-enoyl-CoA + reduced [electron-transfer flavoprotein]. The enzyme catalyses docosanoyl-CoA + oxidized [electron-transfer flavoprotein] + H(+) = (2E)-docosenoyl-CoA + reduced [electron-transfer flavoprotein]. It carries out the reaction tetracosanoyl-CoA + oxidized [electron-transfer flavoprotein] + H(+) = (2E)-tetracosenoyl-CoA + reduced [electron-transfer flavoprotein]. It catalyses the reaction eicosanoyl-CoA + oxidized [electron-transfer flavoprotein] + H(+) = (2E)-eicosenoyl-CoA + reduced [electron-transfer flavoprotein]. The catalysed reaction is hexacosanoyl-CoA + oxidized [electron-transfer flavoprotein] + H(+) = (2E)-hexacosenoyl-CoA + reduced [electron-transfer flavoprotein]. The enzyme catalyses tricosanoyl-CoA + oxidized [electron-transfer flavoprotein] + H(+) = (2E)-tricosenoyl-CoA + reduced [electron-transfer flavoprotein]. Its pathway is lipid metabolism; fatty acid beta-oxidation. Its function is as follows. Acyl-CoA dehydrogenase, that exhibits maximal activity towards saturated C22-CoA. Probably participates in beta-oxydation and energy production but could also play a role in the metabolism of specific fatty acids to control fatty acids composition of cellular lipids in brain. The chain is Acyl-CoA dehydrogenase family member 11 (ACAD11) from Homo sapiens (Human).